A 429-amino-acid polypeptide reads, in one-letter code: Zinc finger protein 385C (429 aa).

Residues 77–107 (ISCNICHLRFNSANQAEAHYKGHRHARKLKA) form a Matrin-type 1 zinc finger. 3 disordered regions span residues 109-224 (EAAK…GRGE), 258-295 (GHQG…GPSP), and 311-340 (QLKQ…NKLQ). Over residues 125 to 146 (TVVSSASPPASGSPGTPQSKGP) the composition is skewed to low complexity. The segment covering 147–162 (ASPPLGPSLQLPPTPD) has biased composition (pro residues). Low complexity predominate over residues 181-193 (CDAAASSSSSSCP). The segment at 225-259 (KGRLYCPTCKVTVNSASQLQAHNTGAKHRWMVEGH) adopts a Matrin-type 2 zinc-finger fold. Residues 262–284 (APRRGRGRPVSRGGTGHKTKRVI) are compositionally biased toward basic residues. The Matrin-type 3 zinc-finger motif lies at 297–327 (FHCALCQLHVNSETQLKQHMSSRRHKDRLAG).

The protein localises to the nucleus. The protein is Zinc finger protein 385C of Mus musculus (Mouse).